A 120-amino-acid chain; its full sequence is Large ribosomal subunit protein uL18 (120 aa).

It belongs to the universal ribosomal protein uL18 family. As to quaternary structure, part of the 50S ribosomal subunit; part of the 5S rRNA/L5/L18/L25 subcomplex. Contacts the 5S and 23S rRNAs.

Its function is as follows. This is one of the proteins that bind and probably mediate the attachment of the 5S RNA into the large ribosomal subunit, where it forms part of the central protuberance. This Brucella anthropi (strain ATCC 49188 / DSM 6882 / CCUG 24695 / JCM 21032 / LMG 3331 / NBRC 15819 / NCTC 12168 / Alc 37) (Ochrobactrum anthropi) protein is Large ribosomal subunit protein uL18.